Here is a 610-residue protein sequence, read N- to C-terminus: MIQVLLVTICLAAFPYQGSSIILESGNVNDYEVVYPRKVTALPKGAVQPKYEDAMQYEFKVNGEPVVLHLGKNKQLFSKDYSETHYSPDGREITTNPPVEDHCYYHGRIENDADSTRSISACNGLKGHFKLQGETYLIEPLKLSDSEAHAVYKYENILKEDEAPKMCGVTQNWESYEPIKKASQLNLTPEQQRYNPFRFVELVLVADKGMVTKNNGDLNKIKTRMYELANNLNDIYRYMYIHVALVGVEIWSDGDKITVTPNVDDTLSSFAEWRKTHLLTRKKHDNAQLLTAIDFNGPTIGYAYIASMCHPKRSVGIVQDYSPINLVLSVVMAHEMGHNLGIHHDHSYCSCGDYACIMGATISHEPSTFFSNCSYIQCWDFIMDHNPECIVNEPLGTDIVSPPVCGNELLEVGEECDCGTPENCQNECCDAATCKLKSGSQCGHGDCCEQCKFSKSGTECRESMSECDPAEHCTGQSSECPADVFHKNGQPCLHNYGYCYNGNCPIMYHQCYALWGADVYEAEDSCFESNKKGNYYGYCRKENGKKIPCAPEDVKCGRLYCKDNSPGQNNPCKMFYSNEDEHKGMVLPGTKCGDGKVCSNGHCVDVATAY.

The signal sequence occupies residues methionine 1–serine 20. Residues isoleucine 21–glutamine 191 constitute a propeptide that is removed on maturation. Position 192 is a pyrrolidone carboxylic acid (glutamine 192). The region spanning arginine 198–proline 394 is the Peptidase M12B domain. 2 residues coordinate Ca(2+): glutamate 201 and aspartate 285. 4 cysteine pairs are disulfide-bonded: cysteine 309–cysteine 389, cysteine 349–cysteine 373, cysteine 351–cysteine 356, and cysteine 373–cysteine 378. Histidine 334 contacts Zn(2+). Glutamate 335 is a catalytic residue. Positions 338 and 344 each coordinate Zn(2+). Asparagine 372 carries an N-linked (GlcNAc...) asparagine glycan. Ca(2+) contacts are provided by cysteine 389, asparagine 392, valine 404, asparagine 407, leucine 409, glutamate 411, glutamate 414, and aspartate 417. Positions proline 402–asparagine 488 constitute a Disintegrin domain. Disulfide bonds link cysteine 405/cysteine 424, cysteine 405/cysteine 434, cysteine 416/cysteine 429, cysteine 416/cysteine 434, cysteine 418/cysteine 424, cysteine 428/cysteine 451, cysteine 442/cysteine 448, cysteine 447/cysteine 473, cysteine 460/cysteine 480, cysteine 467/cysteine 492, cysteine 467/cysteine 499, cysteine 492/cysteine 504, cysteine 499/cysteine 504, cysteine 511/cysteine 526, cysteine 511/cysteine 561, cysteine 526/cysteine 572, cysteine 539/cysteine 549, cysteine 549/cysteine 556, cysteine 556/cysteine 598, cysteine 561/cysteine 572, cysteine 592/cysteine 603, and cysteine 598/cysteine 603. Positions glutamate 466–aspartate 468 match the D/ECD-tripeptide motif. Ca(2+) contacts are provided by aspartate 468, proline 469, glutamate 471, aspartate 483, and valine 484.

This sequence belongs to the venom metalloproteinase (M12B) family. P-III subfamily. P-IIIb sub-subfamily. Monomer. The cofactor is Zn(2+). In the absence of calcium ions, is autocatalytically degraded giving 29 (p29K) and 45 kDa (p45K) fragments. In presence of calcium ions, the p45K is not detected. As to expression, expressed by the venom gland.

The protein localises to the secreted. Its activity is regulated as follows. Inhibited by chelating agents. Calcium ions enhance its activity, they also suppress autoproteolysis, and contribute to the stability of the enzyme against pH, heating, urea and cysteine. Functionally, shows weak hemorrhagic activity. Rapidly degrades the alpha-chain of fibrinogen (FGA). The polypeptide is Zinc metalloproteinase-disintegrin-like brevilysin H6 (Gloydius brevicauda (Korean slamosa snake)).